The primary structure comprises 90 residues: Small ribosomal subunit protein uS15c (90 aa).

Belongs to the universal ribosomal protein uS15 family. Part of the 30S ribosomal subunit.

The protein localises to the plastid. Its subcellular location is the chloroplast. In Piper cenocladum (Ant piper), this protein is Small ribosomal subunit protein uS15c (rps15).